The following is a 60-amino-acid chain: Large ribosomal subunit protein bL33 (60 aa).

This sequence belongs to the bacterial ribosomal protein bL33 family.

This chain is Large ribosomal subunit protein bL33, found in Flavobacterium psychrophilum (strain ATCC 49511 / DSM 21280 / CIP 103535 / JIP02/86).